A 127-amino-acid polypeptide reads, in one-letter code: Aspartate 1-decarboxylase (127 aa).

Serine 25 (schiff-base intermediate with substrate; via pyruvic acid) is an active-site residue. Serine 25 is subject to Pyruvic acid (Ser). A substrate-binding site is contributed by threonine 57. The Proton donor role is filled by tyrosine 58. Residue 73-75 (GAA) participates in substrate binding.

Belongs to the PanD family. As to quaternary structure, heterooctamer of four alpha and four beta subunits. Pyruvate is required as a cofactor. Is synthesized initially as an inactive proenzyme, which is activated by self-cleavage at a specific serine bond to produce a beta-subunit with a hydroxyl group at its C-terminus and an alpha-subunit with a pyruvoyl group at its N-terminus.

The protein localises to the cytoplasm. The catalysed reaction is L-aspartate + H(+) = beta-alanine + CO2. It functions in the pathway cofactor biosynthesis; (R)-pantothenate biosynthesis; beta-alanine from L-aspartate: step 1/1. Functionally, catalyzes the pyruvoyl-dependent decarboxylation of aspartate to produce beta-alanine. The sequence is that of Aspartate 1-decarboxylase from Listeria monocytogenes serovar 1/2a (strain ATCC BAA-679 / EGD-e).